Consider the following 393-residue polypeptide: Cytochrome b (393 aa).

4 helical membrane-spanning segments follow: residues 38–58 (FGSL…FLAM), 82–104 (WLLR…LHIF), 119–139 (VWCL…IGYV), and 185–205 (FFSL…LHLA). Heme b contacts are provided by His-88 and His-102. Residues His-189 and His-203 each coordinate heme b. Position 208 (His-208) interacts with a ubiquinone. A run of 4 helical transmembrane segments spans residues 231–251 (FYVK…IWIF), 295–315 (VGGV…PFFK), 327–347 (IYQG…WIGC), and 354–373 (FVTI…AITP).

This sequence belongs to the cytochrome b family. The main subunits of complex b-c1 are: cytochrome b, cytochrome c1 and the Rieske protein. Requires heme b as cofactor. First mitochondrial-encoded protein to be shown to have its N-terminal methionine cleaved off.

The protein resides in the mitochondrion inner membrane. Component of the ubiquinol-cytochrome c reductase complex (complex III or cytochrome b-c1 complex) that is part of the mitochondrial respiratory chain. The b-c1 complex mediates electron transfer from ubiquinol to cytochrome c. Contributes to the generation of a proton gradient across the mitochondrial membrane that is then used for ATP synthesis. The chain is Cytochrome b (MT-CYB) from Solanum tuberosum (Potato).